We begin with the raw amino-acid sequence, 859 residues long: MVRHFPINDQSLLPAHFGFWPGNSTTPGEVSNRVFSPKIPVVCRKLHSKQPFGMFKGENAMNYAFSTFLIEAIIIIFFIKVVSIALRPFRQPRIVSEIIGGMMIGPSMFGGIRNFNYYLFPPIANYICANIGLMGFFYFLFLTAAKTDVGAIGKAPRKHKYIAAIGVIVPIICVGSVGMAMRDQMDENLQKPSSIGGVVFALSFTSFPVIYTVLRDMNLLNSEVGKFAMSVALLGDMAGVYVIVIFEAMTHADVGGAYSVFWFLVSVVIFAAFMLLVVRRAFDWIVSQTPEGTLVNQNYIVMILMGVLASCFLTDMFGLSIAVGPIWLGLLVPHGPPLGSTLAVRSETFIYEFLMPFTYALVGQGTNIHFLRDETWRNQLSPLFYMTVVGFITKFLSTAFAALFFKVPARESITLGLMMNLRGQMDLLVYLHWIDKRIVGFPGYTVMVLHTVVVTAVTTPLINFFYDPTRPYRSSKHRTIQHTPQNTEMGLVLAVSDHETLSGLITFLDFAYPTKSSPLSIFAVQLVELAGRATPLFIDHEQRKEEEEEEYEEEEEEPERKQSGRIDQVQSAFKLYEEKRNECVTLRSYTAHAPKRLMYQDICELALGKKTAFILLPYQKERLEDAAPTELRDSGMLSVNADVLEHTPCSVCIYFDKGRLKNAVVRLSMDLQHSTNSIRMRQETYRFVVLFLGGADNREALHLADRMSTNPDVTLTVIRFLSYNHEGEDEREKKLDDGVVTWFWVKNESNERVSYKEVVVKNGAETLAAIQAMNVNDYDLWITGRREGINPKILEGLSTWSEDHQLGVIGDTVAASVFASEGSVLVVQQQVRNQKGGDGFLNGKFDYKRFLSPWSHSHN.

12 helical membrane passes run 64–84 (AFST…VVSI), 92–112 (PRIV…FGGI), 122–142 (PIAN…FLFL), 161–181 (YIAA…GMAM), 194–214 (SIGG…YTVL), 227–247 (FAMS…VIFE), 258–278 (YSVF…LLVV), 291–311 (EGTL…LASC), 312–332 (FLTD…GLLV), 348–368 (TFIY…GTNI), 384–404 (FYMT…AALF), and 438–458 (IVGF…TAVT). Positions 538 to 566 (IDHEQRKEEEEEEYEEEEEEPERKQSGRI) are disordered. Acidic residues predominate over residues 546–557 (EEEEEYEEEEEE). The residue at position 857 (Ser857) is a Phosphoserine.

Belongs to the monovalent cation:proton antiporter 2 (CPA2) transporter (TC 2.A.37) family. CHX (TC 2.A.37.4) subfamily. In terms of tissue distribution, specifically expressed in pollen.

The protein localises to the membrane. In terms of biological role, may operate as a cation/H(+) antiporter. The protein is Cation/H(+) antiporter 24 (CHX24) of Arabidopsis thaliana (Mouse-ear cress).